We begin with the raw amino-acid sequence, 263 residues long: Purine nucleoside phosphorylase SAR1163 (263 aa).

3 residues coordinate Zn(2+): histidine 79, cysteine 124, and histidine 141.

This sequence belongs to the purine nucleoside phosphorylase YfiH/LACC1 family. In terms of assembly, homodimer. The cofactor is Cu(2+). Zn(2+) is required as a cofactor.

The catalysed reaction is adenosine + phosphate = alpha-D-ribose 1-phosphate + adenine. It catalyses the reaction S-methyl-5'-thioadenosine + phosphate = 5-(methylsulfanyl)-alpha-D-ribose 1-phosphate + adenine. The enzyme catalyses inosine + phosphate = alpha-D-ribose 1-phosphate + hypoxanthine. It carries out the reaction adenosine + H2O + H(+) = inosine + NH4(+). Purine nucleoside enzyme that catalyzes the phosphorolysis of adenosine and inosine nucleosides, yielding D-ribose 1-phosphate and the respective free bases, adenine and hypoxanthine. Also catalyzes the phosphorolysis of S-methyl-5'-thioadenosine into adenine and S-methyl-5-thio-alpha-D-ribose 1-phosphate. Also has adenosine deaminase activity. This Staphylococcus aureus (strain MRSA252) protein is Purine nucleoside phosphorylase SAR1163.